The primary structure comprises 666 residues: MLRHCSLGLVTTQISAIAPLRLVGSPLFCRSYQDFAGRDRRSSRSREDKPYNSRTRRFDDEGSSNYSSSRDDYRGQNTYGFRGKAPRKNFSSRDNYSSRDNFRSSNGFQERGYKNKFSKNTKSYSKGGNTSGSFIPEGKMAKMTHIGKSDSDIVVTLESLLEKNVISRDLYDSISRMGFEQLTPVQQKTIEPIITNSDSDIIARAKTGTGKTFAFLLPIFQHLLNTKIDSQNKVKSVIVAPTRDLALQIEDEVRKIHSKNRKLKAFECVSLVGGTNFDRSIRYIEKVSPSIVIGTPGRLIDVMEKFGNKFFKDVDFKVLDEADRLLEIGFKEDLSYINKMLNTLNTNSTEHIRTLLFSATLDHKVQSLSNDIMNKEECLYIDTIDENEPQAHEKIDQTLVVGETFADNLYAAIEHIREFGTKTPNYKSILFLPTVKFTKFMATILKRQVKLPIYEFHGQIDQKKRTRIVNEFKTMKKGLLVCTDVGARGMDFPNITEVLQIGLPSEIPNYIHRIGRTARSGKEGSSVTFISKEELPFFEILEDKHNVTIKNIRKFEAQPHVMADLSLRLHVSEDELQEIILSVISFYRACLKDYGINYKNMLPQIAHTYGTLLQNEDKRIPLAGNHILNRLGMDRDPIATKMFQIDEMPNQYNRRGPRSNYNRRRF.

A mitochondrion-targeting transit peptide spans Met-1–Leu-22. Residues Arg-38–Asp-60 are compositionally biased toward basic and acidic residues. The segment at Arg-38–Ser-131 is disordered. The segment covering Asn-120–Ser-131 has biased composition (polar residues). The short motif at Ser-159–Gln-187 is the Q motif element. A Helicase ATP-binding domain is found at Pro-192 to Leu-379. Ala-205–Thr-212 contributes to the ATP binding site. The DEAD box motif lies at Asp-320–Asp-323. One can recognise a Helicase C-terminal domain in the interval Asn-408–His-560.

Belongs to the DEAD box helicase family. DDX18/HAS1 subfamily.

The protein localises to the mitochondrion matrix. It carries out the reaction ATP + H2O = ADP + phosphate + H(+). In terms of biological role, ATP-dependent RNA helicase required for mitochondrial splicing of group I and II introns. Also required for efficient mitochondrial translation. This is ATP-dependent RNA helicase MSS116, mitochondrial (MSS116) from Candida glabrata (strain ATCC 2001 / BCRC 20586 / JCM 3761 / NBRC 0622 / NRRL Y-65 / CBS 138) (Yeast).